An 86-amino-acid polypeptide reads, in one-letter code: Anti-adapter protein IraP (86 aa).

A coiled-coil region spans residues 1 to 38 (MKNLIAELLVKLAQKEEEAKELTVQVEALEIVVTALLR).

This sequence belongs to the IraP family. In terms of assembly, interacts with RssB.

The protein localises to the cytoplasm. Inhibits RpoS proteolysis by regulating RssB activity, thereby increasing the stability of the sigma stress factor RpoS especially during phosphate starvation, but also in stationary phase and during nitrogen starvation. Its effect on RpoS stability is due to its interaction with RssB, which probably blocks the interaction of RssB with RpoS, and the consequent delivery of the RssB-RpoS complex to the ClpXP protein degradation pathway. The polypeptide is Anti-adapter protein IraP (Klebsiella pneumoniae subsp. pneumoniae (strain ATCC 700721 / MGH 78578)).